Consider the following 184-residue polypeptide: Isopentenyl-diphosphate Delta-isomerase (184 aa).

Positions 25 and 32 each coordinate Mn(2+). Residues 30–164 (PLHLAFSCWL…PWAFSPWMVL (135 aa)) form the Nudix hydrolase domain. Cysteine 67 is a catalytic residue. Residue histidine 69 participates in Mn(2+) binding. Glutamate 87 is a binding site for Mg(2+). Residues glutamate 114 and glutamate 116 each contribute to the Mn(2+) site. The active site involves glutamate 116.

The protein belongs to the IPP isomerase type 1 family. Homodimer. Requires Mg(2+) as cofactor. It depends on Mn(2+) as a cofactor.

It localises to the cytoplasm. The enzyme catalyses isopentenyl diphosphate = dimethylallyl diphosphate. The protein operates within isoprenoid biosynthesis; dimethylallyl diphosphate biosynthesis; dimethylallyl diphosphate from isopentenyl diphosphate: step 1/1. Catalyzes the 1,3-allylic rearrangement of the homoallylic substrate isopentenyl (IPP) to its highly electrophilic allylic isomer, dimethylallyl diphosphate (DMAPP). This chain is Isopentenyl-diphosphate Delta-isomerase, found in Klebsiella pneumoniae (strain 342).